Reading from the N-terminus, the 159-residue chain is Ribosome maturation factor RimP (159 aa).

Belongs to the RimP family.

The protein resides in the cytoplasm. Required for maturation of 30S ribosomal subunits. In Trichlorobacter lovleyi (strain ATCC BAA-1151 / DSM 17278 / SZ) (Geobacter lovleyi), this protein is Ribosome maturation factor RimP.